A 514-amino-acid polypeptide reads, in one-letter code: Ferrochelatase-2, chloroplastic (514 aa).

It belongs to the ferrochelatase family.

The protein resides in the plastid. Its subcellular location is the chloroplast. The catalysed reaction is heme b + 2 H(+) = protoporphyrin IX + Fe(2+). It functions in the pathway porphyrin-containing compound metabolism; protoheme biosynthesis; protoheme from protoporphyrin-IX: step 1/1. Functionally, catalyzes the ferrous insertion into protoporphyrin IX. The chain is Ferrochelatase-2, chloroplastic (HEMH) from Cucumis sativus (Cucumber).